A 435-amino-acid chain; its full sequence is 3-phosphoshikimate 1-carboxyvinyltransferase (435 aa).

3-phosphoshikimate is bound by residues Lys22, Ser23, and Arg27. Lys22 lines the phosphoenolpyruvate pocket. The phosphoenolpyruvate site is built by Gly95 and Arg123. 3-phosphoshikimate-binding residues include Ser168, Gln170, Asp319, and Lys346. Gln170 is a phosphoenolpyruvate binding site. Asp319 (proton acceptor) is an active-site residue. Phosphoenolpyruvate-binding residues include Arg350 and Arg393.

The protein belongs to the EPSP synthase family. As to quaternary structure, monomer.

The protein resides in the cytoplasm. It carries out the reaction 3-phosphoshikimate + phosphoenolpyruvate = 5-O-(1-carboxyvinyl)-3-phosphoshikimate + phosphate. It functions in the pathway metabolic intermediate biosynthesis; chorismate biosynthesis; chorismate from D-erythrose 4-phosphate and phosphoenolpyruvate: step 6/7. Its function is as follows. Catalyzes the transfer of the enolpyruvyl moiety of phosphoenolpyruvate (PEP) to the 5-hydroxyl of shikimate-3-phosphate (S3P) to produce enolpyruvyl shikimate-3-phosphate and inorganic phosphate. The polypeptide is 3-phosphoshikimate 1-carboxyvinyltransferase (Chloroflexus aurantiacus (strain ATCC 29364 / DSM 637 / Y-400-fl)).